Here is a 149-residue protein sequence, read N- to C-terminus: Golgi apparatus membrane protein tvp-18 (149 aa).

The N-linked (GlcNAc...) asparagine glycan is linked to N11. Helical transmembrane passes span 18-38 (WLGI…IFTF), 41-61 (IIIV…FVEV), 84-103 (NYTR…LSCI), and 108-128 (SLLV…LAAL).

Belongs to the TVP18 family.

Its subcellular location is the golgi apparatus membrane. Golgi membrane protein involved in vesicular trafficking. The polypeptide is Golgi apparatus membrane protein tvp-18 (tvp-18) (Neurospora crassa (strain ATCC 24698 / 74-OR23-1A / CBS 708.71 / DSM 1257 / FGSC 987)).